A 147-amino-acid chain; its full sequence is UPF0735 ACT domain-containing protein BPUM_2431 (147 aa).

The region spanning Thr-70 to Ser-145 is the ACT domain.

This sequence belongs to the UPF0735 family.

This Bacillus pumilus (strain SAFR-032) protein is UPF0735 ACT domain-containing protein BPUM_2431.